A 157-amino-acid polypeptide reads, in one-letter code: uncharacterized protein (157 aa).

The 102-residue stretch at 33–134 (NLKHFLDVAR…MYRADKLSRL (102 aa)) folds into the HD domain.

This is an uncharacterized protein from Clostridium beijerinckii (strain ATCC 51743 / NCIMB 8052) (Clostridium acetobutylicum).